Reading from the N-terminus, the 904-residue chain is Translation initiation factor IF-2 (904 aa).

Disordered regions lie at residues 103 to 122 (YVKSENEGSGRAAPMTPDEE), 137 to 252 (NLEE…MVAG), and 267 to 315 (HLSA…FERP). Over residues 137-177 (NLEEQQRLAESDRVRDEAIQRKREEEQAAKDRAEAERKAAE) the composition is skewed to basic and acidic residues. Composition is skewed to low complexity over residues 178-230 (EAAA…AAPA) and 280-293 (RGKPTGRPGSSSSR). Positions 403–572 (SRPPVVTIMG…SLQAEVLELK (170 aa)) constitute a tr-type G domain. The segment at 412–419 (GHVDHGKT) is G1. Position 412–419 (412–419 (GHVDHGKT)) interacts with GTP. The tract at residues 437 to 441 (GITQH) is G2. The interval 458–461 (DTPG) is G3. GTP is bound by residues 458–462 (DTPGH) and 512–515 (NKID). Residues 512-515 (NKID) form a G4 region. Positions 548-550 (SAK) are G5.

Belongs to the TRAFAC class translation factor GTPase superfamily. Classic translation factor GTPase family. IF-2 subfamily.

The protein localises to the cytoplasm. One of the essential components for the initiation of protein synthesis. Protects formylmethionyl-tRNA from spontaneous hydrolysis and promotes its binding to the 30S ribosomal subunits. Also involved in the hydrolysis of GTP during the formation of the 70S ribosomal complex. This chain is Translation initiation factor IF-2, found in Xanthomonas euvesicatoria pv. vesicatoria (strain 85-10) (Xanthomonas campestris pv. vesicatoria).